The sequence spans 549 residues: Glucose-6-phosphate isomerase (549 aa).

An N6-acetyllysine mark is found at K80, K228, and K234. The active-site Proton donor is the E355. Residues H386 and K514 contribute to the active site.

It belongs to the GPI family.

It is found in the cytoplasm. The enzyme catalyses alpha-D-glucose 6-phosphate = beta-D-fructose 6-phosphate. It functions in the pathway carbohydrate biosynthesis; gluconeogenesis. It participates in carbohydrate degradation; glycolysis; D-glyceraldehyde 3-phosphate and glycerone phosphate from D-glucose: step 2/4. Functionally, catalyzes the reversible isomerization of glucose-6-phosphate to fructose-6-phosphate. In Escherichia coli (strain SE11), this protein is Glucose-6-phosphate isomerase.